The following is a 232-amino-acid chain: Enolase-phosphatase E1 (232 aa).

It belongs to the HAD-like hydrolase superfamily. MasA/MtnC family. In terms of assembly, monomer. Requires Mg(2+) as cofactor.

The catalysed reaction is 5-methylsulfanyl-2,3-dioxopentyl phosphate + H2O = 1,2-dihydroxy-5-(methylsulfanyl)pent-1-en-3-one + phosphate. The protein operates within amino-acid biosynthesis; L-methionine biosynthesis via salvage pathway; L-methionine from S-methyl-5-thio-alpha-D-ribose 1-phosphate: step 3/6. It participates in amino-acid biosynthesis; L-methionine biosynthesis via salvage pathway; L-methionine from S-methyl-5-thio-alpha-D-ribose 1-phosphate: step 4/6. Its function is as follows. Bifunctional enzyme that catalyzes the enolization of 2,3-diketo-5-methylthiopentyl-1-phosphate (DK-MTP-1-P) into the intermediate 2-hydroxy-3-keto-5-methylthiopentenyl-1-phosphate (HK-MTPenyl-1-P), which is then dephosphorylated to form the acireductone 1,2-dihydroxy-3-keto-5-methylthiopentene (DHK-MTPene). The protein is Enolase-phosphatase E1 of Xanthomonas campestris pv. campestris (strain 8004).